Here is a 305-residue protein sequence, read N- to C-terminus: Aspartate carbamoyltransferase catalytic subunit (305 aa).

2 residues coordinate carbamoyl phosphate: R58 and T59. K86 provides a ligand contact to L-aspartate. Residues R108, H136, and Q139 each coordinate carbamoyl phosphate. L-aspartate is bound by residues R169 and R223. Residues G264 and P265 each coordinate carbamoyl phosphate.

Belongs to the aspartate/ornithine carbamoyltransferase superfamily. ATCase family. As to quaternary structure, heterododecamer (2C3:3R2) of six catalytic PyrB chains organized as two trimers (C3), and six regulatory PyrI chains organized as three dimers (R2).

It carries out the reaction carbamoyl phosphate + L-aspartate = N-carbamoyl-L-aspartate + phosphate + H(+). Its pathway is pyrimidine metabolism; UMP biosynthesis via de novo pathway; (S)-dihydroorotate from bicarbonate: step 2/3. Functionally, catalyzes the condensation of carbamoyl phosphate and aspartate to form carbamoyl aspartate and inorganic phosphate, the committed step in the de novo pyrimidine nucleotide biosynthesis pathway. The sequence is that of Aspartate carbamoyltransferase catalytic subunit from Syntrophobacter fumaroxidans (strain DSM 10017 / MPOB).